Here is a 453-residue protein sequence, read N- to C-terminus: Bifunctional protein GlmU (453 aa).

The interval 1–228 is pyrophosphorylase; the sequence is MPHWAAVIMA…VHEALGINSR (228 aa). UDP-N-acetyl-alpha-D-glucosamine contacts are provided by residues Lys-23, Gln-73, 78 to 79, 100 to 102, Gly-139, Glu-153, Asn-168, and Asn-226; these read GT and SGD. Mg(2+) is bound at residue Asp-102. Asn-226 is a binding site for Mg(2+). Positions 229 to 249 are linker; that stretch reads AQLAAAEDVARQRILSYWMEE. The interval 250 to 453 is N-acetyltransferase; the sequence is GVTIIDPRST…IENWVRNKKK (204 aa). Positions 331 and 349 each coordinate UDP-N-acetyl-alpha-D-glucosamine. His-361 acts as the Proton acceptor in catalysis. Residues Tyr-364 and Asn-375 each contribute to the UDP-N-acetyl-alpha-D-glucosamine site. Residues Ala-378, 384 to 385, Ser-403, Ala-421, and Arg-438 each bind acetyl-CoA; that span reads NY.

This sequence in the N-terminal section; belongs to the N-acetylglucosamine-1-phosphate uridyltransferase family. It in the C-terminal section; belongs to the transferase hexapeptide repeat family. Homotrimer. It depends on Mg(2+) as a cofactor.

The protein resides in the cytoplasm. The catalysed reaction is alpha-D-glucosamine 1-phosphate + acetyl-CoA = N-acetyl-alpha-D-glucosamine 1-phosphate + CoA + H(+). It carries out the reaction N-acetyl-alpha-D-glucosamine 1-phosphate + UTP + H(+) = UDP-N-acetyl-alpha-D-glucosamine + diphosphate. It functions in the pathway nucleotide-sugar biosynthesis; UDP-N-acetyl-alpha-D-glucosamine biosynthesis; N-acetyl-alpha-D-glucosamine 1-phosphate from alpha-D-glucosamine 6-phosphate (route II): step 2/2. The protein operates within nucleotide-sugar biosynthesis; UDP-N-acetyl-alpha-D-glucosamine biosynthesis; UDP-N-acetyl-alpha-D-glucosamine from N-acetyl-alpha-D-glucosamine 1-phosphate: step 1/1. It participates in bacterial outer membrane biogenesis; LPS lipid A biosynthesis. Functionally, catalyzes the last two sequential reactions in the de novo biosynthetic pathway for UDP-N-acetylglucosamine (UDP-GlcNAc). The C-terminal domain catalyzes the transfer of acetyl group from acetyl coenzyme A to glucosamine-1-phosphate (GlcN-1-P) to produce N-acetylglucosamine-1-phosphate (GlcNAc-1-P), which is converted into UDP-GlcNAc by the transfer of uridine 5-monophosphate (from uridine 5-triphosphate), a reaction catalyzed by the N-terminal domain. This is Bifunctional protein GlmU from Desulfitobacterium hafniense (strain Y51).